Reading from the N-terminus, the 574-residue chain is 2-succinyl-5-enolpyruvyl-6-hydroxy-3-cyclohexene-1-carboxylate synthase (574 aa).

This sequence belongs to the TPP enzyme family. MenD subfamily. In terms of assembly, homodimer. Mg(2+) is required as a cofactor. It depends on Mn(2+) as a cofactor. Thiamine diphosphate serves as cofactor.

It catalyses the reaction isochorismate + 2-oxoglutarate + H(+) = 5-enolpyruvoyl-6-hydroxy-2-succinyl-cyclohex-3-ene-1-carboxylate + CO2. It participates in quinol/quinone metabolism; 1,4-dihydroxy-2-naphthoate biosynthesis; 1,4-dihydroxy-2-naphthoate from chorismate: step 2/7. It functions in the pathway cofactor biosynthesis; phylloquinone biosynthesis. Functionally, catalyzes the thiamine diphosphate-dependent decarboxylation of 2-oxoglutarate and the subsequent addition of the resulting succinic semialdehyde-thiamine pyrophosphate anion to isochorismate to yield 2-succinyl-5-enolpyruvyl-6-hydroxy-3-cyclohexene-1-carboxylate (SEPHCHC). This Prochlorococcus marinus (strain SARG / CCMP1375 / SS120) protein is 2-succinyl-5-enolpyruvyl-6-hydroxy-3-cyclohexene-1-carboxylate synthase.